A 488-amino-acid chain; its full sequence is N-succinylglutamate 5-semialdehyde dehydrogenase (488 aa).

221–226 (GSSRTG) provides a ligand contact to NAD(+). Active-site residues include Glu244 and Cys278.

This sequence belongs to the aldehyde dehydrogenase family. AstD subfamily.

The enzyme catalyses N-succinyl-L-glutamate 5-semialdehyde + NAD(+) + H2O = N-succinyl-L-glutamate + NADH + 2 H(+). The protein operates within amino-acid degradation; L-arginine degradation via AST pathway; L-glutamate and succinate from L-arginine: step 4/5. Its function is as follows. Catalyzes the NAD-dependent reduction of succinylglutamate semialdehyde into succinylglutamate. This chain is N-succinylglutamate 5-semialdehyde dehydrogenase, found in Pseudomonas syringae pv. syringae (strain B728a).